We begin with the raw amino-acid sequence, 159 residues long: 2-C-methyl-D-erythritol 2,4-cyclodiphosphate synthase (159 aa).

2 residues coordinate a divalent metal cation: Asp8 and His10. 4-CDP-2-C-methyl-D-erythritol 2-phosphate is bound by residues Asp8 to His10 and His34 to Ser35. His42 is a binding site for a divalent metal cation. 4-CDP-2-C-methyl-D-erythritol 2-phosphate is bound by residues Asp56–Gly58, Phe61–Asp65, Ala100–Ala106, Thr132–Glu135, Phe139, and Arg142.

This sequence belongs to the IspF family. Homotrimer. It depends on a divalent metal cation as a cofactor.

It carries out the reaction 4-CDP-2-C-methyl-D-erythritol 2-phosphate = 2-C-methyl-D-erythritol 2,4-cyclic diphosphate + CMP. It functions in the pathway isoprenoid biosynthesis; isopentenyl diphosphate biosynthesis via DXP pathway; isopentenyl diphosphate from 1-deoxy-D-xylulose 5-phosphate: step 4/6. Involved in the biosynthesis of isopentenyl diphosphate (IPP) and dimethylallyl diphosphate (DMAPP), two major building blocks of isoprenoid compounds. Catalyzes the conversion of 4-diphosphocytidyl-2-C-methyl-D-erythritol 2-phosphate (CDP-ME2P) to 2-C-methyl-D-erythritol 2,4-cyclodiphosphate (ME-CPP) with a corresponding release of cytidine 5-monophosphate (CMP). The polypeptide is 2-C-methyl-D-erythritol 2,4-cyclodiphosphate synthase (Aliivibrio salmonicida (strain LFI1238) (Vibrio salmonicida (strain LFI1238))).